Consider the following 217-residue polypeptide: MVASGRTASKGRGNGATPVRPTAGDATPVDSGQPSDTTYGGLEVSAERTRLRIPRDLSLEAWCRLGGRILAVCDSSVWWIGDWLVFGQNQYGDRYRRAMKETKLDYQTLRNYAWVARKFEPSRRRDSLTFQHHMEVAALSEAEQDHWLDFAVRLNWSRNELRKQIRASLSGEEDDLRCEVQLNLQLDELRLERWREAARGSNLTLTDWILSVVDGAV.

The segment at 1-41 (MVASGRTASKGRGNGATPVRPTAGDATPVDSGQPSDTTYGG) is disordered.

In terms of biological role, transcription regulator that specifically regulates expression of genes involved in the novobiocin biosynthesis pathway. Probably acts as a positive regulator of transcription. Does not bind DNA. The polypeptide is Transcriptional regulator NovE (novE) (Streptomyces niveus (Streptomyces spheroides)).